The sequence spans 118 residues: Basic phospholipase A2 PA-9C (118 aa).

7 cysteine pairs are disulfide-bonded: cysteine 11-cysteine 71, cysteine 27-cysteine 117, cysteine 29-cysteine 45, cysteine 44-cysteine 98, cysteine 51-cysteine 91, cysteine 60-cysteine 84, and cysteine 78-cysteine 89. 3 residues coordinate Ca(2+): tyrosine 28, glycine 30, and glycine 32. Residue histidine 48 is part of the active site. Position 49 (aspartate 49) interacts with Ca(2+). Aspartate 92 is a catalytic residue.

The protein belongs to the phospholipase A2 family. Group I subfamily. D49 sub-subfamily. The cofactor is Ca(2+). In terms of tissue distribution, expressed by the venom gland.

It localises to the secreted. The enzyme catalyses a 1,2-diacyl-sn-glycero-3-phosphocholine + H2O = a 1-acyl-sn-glycero-3-phosphocholine + a fatty acid + H(+). In terms of biological role, PLA2 catalyzes the calcium-dependent hydrolysis of the 2-acyl groups in 3-sn-phosphoglycerides. This is Basic phospholipase A2 PA-9C from Pseudechis australis (Mulga snake).